The chain runs to 137 residues: Mandibular organ-inhibiting hormone (137 aa).

The N-terminal stretch at 1-26 is a signal peptide; the sequence is MTTKCTVMAVVLAACICLQVLPQAYG. A Pyrrolidone carboxylic acid modification is found at Q63. 3 disulfide bridges follow: C69-C105, C85-C101, and C88-C114. At V134 the chain carries Valine amide.

Belongs to the arthropod CHH/MIH/GIH/VIH hormone family. As to expression, produced by the medulla terminalis X-organ in the eyestalks and transported to the sinus gland where it is stored and released.

It localises to the secreted. Represses the synthesis of methyl farnesoate, the precursor of insect juvenile hormone III in the mandibular organ. Also has hyperglycemic activity. This is Mandibular organ-inhibiting hormone from Libinia emarginata (Portly spider crab).